The chain runs to 239 residues: Serine protease SplF (239 aa).

The first 36 residues, 1–36 (MNKNIIIKSIAALTILTSITGVGTTVVDGIQQTAKA), serve as a signal peptide directing secretion. Catalysis depends on charge relay system residues histidine 75, aspartate 114, and serine 192.

Belongs to the peptidase S1B family.

It localises to the secreted. This Staphylococcus aureus (strain JH9) protein is Serine protease SplF (splF).